Here is a 540-residue protein sequence, read N- to C-terminus: Cytochrome P450 27C1 (540 aa).

Heme is bound at residue Cys-486.

This sequence belongs to the cytochrome P450 family. It depends on heme as a cofactor. In terms of tissue distribution, following L-thyroxine, expressed in the retinal pigment epithelium (at protein level).

The protein localises to the membrane. It carries out the reaction all-trans-retinol + 2 reduced [adrenodoxin] + O2 + 2 H(+) = all-trans-3,4-didehydroretinol + 2 oxidized [adrenodoxin] + 2 H2O. Efficiently catalyzes the conversion of all-trans retinol (also called vitamin A1, the precursor of 11-cis retinal) to 3,4-didehydroretinol (also called vitamin A2, the precursor of 11-cis 3,4-didehydroretinal). Also acts on all-trans retinal and all-trans retinoic acid. The replacement of 11-cis retinal chromophore in photopigments with 11-cis 3,4-didehydroretinal enhances sensitivity to long-wavelength light. This may improve vision in fresh water which is often turbid. The chain is Cytochrome P450 27C1 (cyp27c1) from Danio rerio (Zebrafish).